The sequence spans 98 residues: Citrate lyase acyl carrier protein (98 aa).

Position 14 is an O-(phosphoribosyl dephospho-coenzyme A)serine (Ser-14).

This sequence belongs to the CitD family. As to quaternary structure, oligomer with a subunit composition of (alpha,beta,gamma)6.

Its subcellular location is the cytoplasm. Covalent carrier of the coenzyme of citrate lyase. In Shigella boydii serotype 18 (strain CDC 3083-94 / BS512), this protein is Citrate lyase acyl carrier protein.